Reading from the N-terminus, the 1314-residue chain is MASKGAGVPLSRKSYRLTSETERPRVTGIVHEKLLNDYLHRIFSSPDHATPTATSRKPLNFQNLPEHLDQLLQVDSEDEESQGQVEGRLGPSTVVLDHTGGFEGLLLVDDDLLGVIGHSNFGTIRSTTCVYKGKWVYEVLISSQGLMQIGWCTINCRFNQEEGVGDTHNSYAYDGNRVRKWNVTTTNYGKAWAAGDIVSCLIDLDDGTLSFCLNGVSLGTAFENLSRGLGMAYFPAISLSFKESVAFNFGSRPLRYPVAGYRPLQDPPCADLTRAQRLLGCFRAVLSVELDPMEGRLVEKESSEWQLQGQPTVLLTLAHIFHRFAPLLHQVYLVEAVLMSFLLGIVEKATPAQAQSAVHQILDLLWLFMEDYEVQDCLKQLMMSLLRLYRFSPIVPDLGLQIHYLRLTIAILRHQKSRKFLLSNVLFDVLRSVVFFYIKSPLRVEEAGLQELIPTTWWPHRSSREGKDSAEDRAEAAEERPRRRAYERGCQRLKKRIEVVEALQVQILKLLLDNKDDNGGEASRYIFLTKFRKFLQENASGRGNMPMLCPPEYMVCFLHRLISALRYYWDEYKASNPRASCSEEAYIPPQVFYNGKVDYFDLQRLGGLLSHLRKTLKDDLASKANIVIDPLELQATTMDDLDEDEEPAPAAAQRPVQALAVGGALPLPRPGWLSSPTLGRANRFLSTAAVSLMTPRRPLSTSEKVKVRTLSVEQRTREDIEGSHWNEGLLLGRPPEEPEQPLTENSLLEVLDGAIMMYNLSVHQQLGKMVGVSDDVNEYATALRDTEDKIRRCPKRRKDILAELTKSQKVFSEKLDHLSRRLAWVHATVYSQEKMLDIYWLLRVCLRTIEHGDRTGSLFAFMPEFYLSVAINSYSALKNYFGPVHSMEELPGYEETLTRLAAILAKHFADTRIVGTDIRDSLMQALASYVCYPHSLRAVERIPEEQRVAMVRSLLAPYEQRPWAQTNWILVRLWRGCGFGYRYTRLPHLLKTKPEDASLPSLQKPCPSTLLQQHMADLLRQGPDVAPSFLNSVLNQLNWAFSEFIGMIQEIQQAAERLERNFVDSRQLKVCATCFDLSVSLLRVLEMTITLVPEIFLDWARPTSEMLLRRLAQLLNQVLNRVTAERNLFDRVVTLRLPGLESVDHYPILVAVTGILVRLLVHGPSSETERATSVLLADPCFQLRSISYLLGQPEPPAPGAALPAPDRKRFSLQSYADYISAEELAQVEQMLAHLTSASAQAAAASLPTSEEDLCPICYAHPISAVFQPCGHKSCKACIDQHLMNNKDCFFCKATIVSVEDWEKGASASATSSAA.

Alanine 2 carries the N-acetylalanine modification. The B30.2/SPRY domain maps to 74–254 (VDSEDEESQG…VAFNFGSRPL (181 aa)). A disordered region spans residues 460-481 (HRSSREGKDSAEDRAEAAEERP). The segment covering 462 to 481 (SSREGKDSAEDRAEAAEERP) has biased composition (basic and acidic residues). Serine 675 is modified (phosphoserine). Position 683 is an asymmetric dimethylarginine (arginine 683). The segment at 968-974 (WILVRLW) is interaction with NFKB1. The Zn(2+) site is built by cysteine 1254, cysteine 1257, cysteine 1269, histidine 1271, cysteine 1274, cysteine 1277, cysteine 1288, and cysteine 1291. An RING-type zinc finger spans residues 1254–1292 (CPICYAHPISAVFQPCGHKSCKACIDQHLMNNKDCFFCK).

In terms of assembly, component of the KPC complex composed of RNF123/KPC1 and UBAC1/KPC2. Interacts with UBAC1 and CDKN1B via its N-terminal domain. Interacts with RIGI (via N-terminus) and IFIH1 (via N-terminus). Ubiquitinated, leading to its degradation. Deubiquitinated by USP19, thereby stimulating CDKN1B ubiquitin-dependent degradation.

The protein resides in the cytoplasm. The catalysed reaction is S-ubiquitinyl-[E2 ubiquitin-conjugating enzyme]-L-cysteine + [acceptor protein]-L-lysine = [E2 ubiquitin-conjugating enzyme]-L-cysteine + N(6)-ubiquitinyl-[acceptor protein]-L-lysine.. The protein operates within protein modification; protein ubiquitination. In terms of biological role, catalytic subunit of the KPC complex that acts as E3 ubiquitin-protein ligase. Promotes the ubiquitination and proteasome-mediated degradation of CDKN1B which is the cyclin-dependent kinase inhibitor at the G0-G1 transition of the cell cycle. Also acts as a key regulator of the NF-kappa-B signaling by promoting maturation of the NFKB1 component of NF-kappa-B. Acts by catalyzing ubiquitination of the NFKB1 p105 precursor, leading to limited proteasomal degradation of NFKB1 p105 and generation of the active NFKB1 p50 subunit. Functions also as an inhibitor of innate antiviral signaling mediated by RIGI and IFIH1 independently of its E3 ligase activity. Interacts with the N-terminal CARD domains of RIGI and IFIH1 and competes with the downstream adapter MAVS. The chain is E3 ubiquitin-protein ligase RNF123 from Oryctolagus cuniculus (Rabbit).